The sequence spans 628 residues: Probable potassium transport system protein Kup (628 aa).

Helical transmembrane passes span 15-35 (LAIA…LYSL), 55-75 (VISL…VLFV), 104-124 (AGLL…DAVI), 142-162 (PHLS…LFWI), 173-193 (LFGP…LWHI), 210-230 (TFMA…VLVL), 252-272 (WYVL…ALLM), 281-301 (PFFL…STIA), 342-362 (IYVP…VIAF), 372-392 (YGIA…VVMV), 400-420 (LLVA…FGAN), and 426-446 (EGGW…MTWY).

This sequence belongs to the HAK/KUP transporter (TC 2.A.72) family.

The protein localises to the cell inner membrane. The enzyme catalyses K(+)(in) + H(+)(in) = K(+)(out) + H(+)(out). Functionally, transport of potassium into the cell. Likely operates as a K(+):H(+) symporter. This is Probable potassium transport system protein Kup from Paraburkholderia xenovorans (strain LB400).